A 114-amino-acid polypeptide reads, in one-letter code: Hydrogenase maturation factor HypA (114 aa).

A Ni(2+)-binding site is contributed by His-2. 4 residues coordinate Zn(2+): Cys-73, Cys-76, Cys-90, and Cys-93.

It belongs to the HypA/HybF family.

Its function is as follows. Involved in the maturation of [NiFe] hydrogenases. Required for nickel insertion into the metal center of the hydrogenase. The polypeptide is Hydrogenase maturation factor HypA (Chloroflexus aurantiacus (strain ATCC 29366 / DSM 635 / J-10-fl)).